A 353-amino-acid chain; its full sequence is Methylthioribose-1-phosphate isomerase (353 aa).

Substrate contacts are provided by residues 51–53 (RGA), Arg-94, and Gln-199. Residue Asp-240 is the Proton donor of the active site. 250 to 251 (NK) is a binding site for substrate.

This sequence belongs to the EIF-2B alpha/beta/delta subunits family. MtnA subfamily. In terms of assembly, homodimer.

It catalyses the reaction 5-(methylsulfanyl)-alpha-D-ribose 1-phosphate = 5-(methylsulfanyl)-D-ribulose 1-phosphate. Its pathway is amino-acid biosynthesis; L-methionine biosynthesis via salvage pathway; L-methionine from S-methyl-5-thio-alpha-D-ribose 1-phosphate: step 1/6. Its function is as follows. Catalyzes the interconversion of methylthioribose-1-phosphate (MTR-1-P) into methylthioribulose-1-phosphate (MTRu-1-P). This Bacillus cereus (strain ATCC 14579 / DSM 31 / CCUG 7414 / JCM 2152 / NBRC 15305 / NCIMB 9373 / NCTC 2599 / NRRL B-3711) protein is Methylthioribose-1-phosphate isomerase.